The chain runs to 79 residues: Cyclotide phyb-A (79 aa).

Residues Met1–Thr43 constitute a propeptide that is removed on maturation. A cross-link (cyclopeptide (Gly-Asn)) is located at residues Gly44–Asn73. 3 disulfide bridges follow: Cys47/Cys63, Cys51/Cys65, and Cys56/Cys70. Positions Gly74–Lys79 are excised as a propeptide.

This is a cyclic peptide. Post-translationally, contains 3 disulfide bonds. As to expression, expressed in midvein, lamina and periphery of leaves (at protein level).

Probably participates in a plant defense mechanism. This is Cyclotide phyb-A from Petunia hybrida (Petunia).